The chain runs to 178 residues: Protein AUXIN-REGULATED GENE INVOLVED IN ORGAN SIZE (178 aa).

Residues 1-85 (MYLLSPRNGD…GGGGGSNIRE (85 aa)) are disordered. Residues 10–27 (DEEDEQEEIQELISDDEP) are compositionally biased toward acidic residues. Positions 33-47 (ASCATAASSSSSSGS) are enriched in low complexity. The interval 100–151 (FSVESLLLLVCVTASLVILPLVLPPLPPPPSMLMLVPVAMLVLLLALAFMPT) is organ Size Related (OSR) domain. The next 2 membrane-spanning stretches (helical) occupy residues 105 to 125 (LLLLVCVTASLVILPLVLPPL) and 131 to 151 (MLMLVPVAMLVLLLALAFMPT). The disordered stretch occupies residues 153 to 178 (TSSSSSAGGGGGGGRNGATTGHAPYL). Gly residues predominate over residues 159 to 168 (AGGGGGGGRN). Over residues 169–178 (GATTGHAPYL) the composition is skewed to low complexity.

Belongs to the plant organ size related (OSR) protein family. In terms of tissue distribution, mostly expressed in young tissues such as young roots, young leaves, and seeds. Also present in stems, mature leaves, and spikelets.

Its subcellular location is the membrane. It localises to the nucleus. It is found in the cytoplasm. The protein resides in the endoplasmic reticulum. Promotes both cell expansion and proliferation-dependent organ growth. The protein is Protein AUXIN-REGULATED GENE INVOLVED IN ORGAN SIZE (ARGOS) of Oryza sativa subsp. japonica (Rice).